A 310-amino-acid polypeptide reads, in one-letter code: MANFKHKDIIALQDLTKQEIELLLSTAESMREINNRDIKKVPTLRGKTIVNLFYESSTRTRTSFELAAKRLSADTVNISPSTSSATKGETLADTALNLLAMKPDIIVMRHSVSGSHYFLSKKLPCSIVNAGDGVHEHPSQGLLDMLTMKDRFGRLDGLKVAIVGDISHSRVARSNIQGLTKLGSQVFLAGPPTMMPPGVERLGNVTVCDSLREAIQDADVVMMLRIQQERQGKTLMPNAREYARYFGLNPENLKLAKPDAMVMHPGPINRGVEMASSVVDGDQSWILKQVENGVAVRMSMLYHVCEGELE.

2 residues coordinate carbamoyl phosphate: arginine 59 and threonine 60. Lysine 87 contacts L-aspartate. The carbamoyl phosphate site is built by arginine 109, histidine 137, and glutamine 140. Residues arginine 170 and arginine 225 each coordinate L-aspartate. Glycine 266 and proline 267 together coordinate carbamoyl phosphate.

It belongs to the aspartate/ornithine carbamoyltransferase superfamily. ATCase family. As to quaternary structure, heterododecamer (2C3:3R2) of six catalytic PyrB chains organized as two trimers (C3), and six regulatory PyrI chains organized as three dimers (R2).

It catalyses the reaction carbamoyl phosphate + L-aspartate = N-carbamoyl-L-aspartate + phosphate + H(+). The protein operates within pyrimidine metabolism; UMP biosynthesis via de novo pathway; (S)-dihydroorotate from bicarbonate: step 2/3. In terms of biological role, catalyzes the condensation of carbamoyl phosphate and aspartate to form carbamoyl aspartate and inorganic phosphate, the committed step in the de novo pyrimidine nucleotide biosynthesis pathway. The sequence is that of Aspartate carbamoyltransferase catalytic subunit from Pelobacter propionicus (strain DSM 2379 / NBRC 103807 / OttBd1).